A 907-amino-acid chain; its full sequence is Potassium channel AKT3 (907 aa).

The Cytoplasmic portion of the chain corresponds to 1-75; it reads MPTTKCAVPL…YDRRYELWNN (75 aa). A helical membrane pass occupies residues 76–96; that stretch reads YLILLVVYSAWVTPFEFGFVP. Topologically, residues 97–102 are extracellular; sequence EPAGAL. The helical transmembrane segment at 103–123 threads the bilayer; it reads AAADNAVNAFFAVDIVLTFFV. At 124-146 the chain is on the cytoplasmic side; that stretch reads AYTDPKTFLLQDDPRKIALRYIT. Residues 147 to 167 traverse the membrane as a helical segment; it reads TWFVLDVVATIPTELARRILP. Over 168–174 the chain is Extracellular; the sequence is PDLRSYG. A helical; Voltage-sensor membrane pass occupies residues 175–195; the sequence is FFGILRLWRLHRVGILFARLE. Residues 196-209 lie on the Cytoplasmic side of the membrane; it reads KDRKFSYFWVRCVK. Residues 210–230 traverse the membrane as a helical segment; the sequence is LVCVTLFAVHCSACFYYLLAD. The Extracellular portion of the chain corresponds to 231-257; the sequence is RYPDPTNTWISAYMPNFHKASIWSRYV. Positions 258–277 form an intramembrane region, pore-forming; sequence ASMYWSITTLSTVGYGDMHA. Residues 278-288 lie on the Extracellular side of the membrane; it reads ENTGEMVFTTT. The helical transmembrane segment at 289–309 threads the bilayer; that stretch reads YMLFNLGLTAYIIGNMTNLVV. Residues 310–907 are Cytoplasmic-facing; that stretch reads HGTSRTRKFR…VPPENRSRNQ (598 aa). 388–512 serves as a coordination point for a nucleoside 3',5'-cyclic phosphate; that stretch reads LFEGVSNDLI…TIVMNNLIQY (125 aa). ANK repeat units follow at residues 539–568, 572–601, 605–634, 636–665, and 670–699; these read DFPI…DPNE, YGRT…DSNS, EGRV…DLSG, DAAP…DVSG, and DGTT…DADA. Disordered regions lie at residues 726-779 and 801-824; these read ATRH…TPQR and GGYR…SSPP. A compositionally biased stretch (low complexity) spans 754-776; sequence SSPSSSSRRGRTSSTSAASARST. The span at 803 to 812 shows a compositional bias: gly residues; that stretch reads YRGGGGGGGA. Positions 827-907 constitute a KHA domain; that stretch reads RVAISCPESR…VPPENRSRNQ (81 aa).

This sequence belongs to the potassium channel family. Plant (TC 1.A.1.4) subfamily.

Its subcellular location is the membrane. Probable inward-rectifying potassium channel. Assuming opened or closed conformations in response to the voltage difference across the membrane, the channel is activated by hyperpolarization. This Oryza sativa subsp. japonica (Rice) protein is Potassium channel AKT3.